The chain runs to 521 residues: Probable rhamnogalacturonase B (521 aa).

Positions 1–21 (MRLHAFTLLSLLGLVPSFAAA) are cleaved as a signal peptide. An intrachain disulfide couples C42 to C68. N-linked (GlcNAc...) asparagine glycosylation is present at N145. The active-site Proton donor is D219. A disulfide bond links C221 and C238. N-linked (GlcNAc...) asparagine glycosylation is present at N239. Residue H294 is part of the active site. The N-linked (GlcNAc...) asparagine glycan is linked to N321. 2 cysteine pairs are disulfide-bonded: C344–C350 and C372–C381. The segment at 462–521 (ETPAAASRSEQVVQGAPQETGQSAPESAGPVPSGNPGPVPTGGSRPSRHRHGHHHFGSAI) is disordered. Positions 469–486 (RSEQVVQGAPQETGQSAP) are enriched in polar residues. A compositionally biased stretch (basic residues) spans 507 to 521 (PSRHRHGHHHFGSAI).

It belongs to the glycosyl hydrolase 28 family.

The protein resides in the secreted. The catalysed reaction is Endohydrolysis of alpha-D-GalA-(1-&gt;2)-alpha-L-Rha glycosidic bond in the rhamnogalacturonan I backbone with initial inversion of anomeric configuration releasing oligosaccharides with beta-D-GalA at the reducing end.. Functionally, pectinolytic enzymes consist of four classes of enzymes: pectine lyase, polygalacturonase, pectin methylesterase and rhamnogalacturonase. Hydrolyzes alpha-D-galacturonopyranosyl-(1,2)-alpha-L-rhamnopyranosyl linkages in the backbone of the hairy regions of pectins. This chain is Probable rhamnogalacturonase B (rhgB), found in Aspergillus fumigatus (strain ATCC MYA-4609 / CBS 101355 / FGSC A1100 / Af293) (Neosartorya fumigata).